The chain runs to 102 residues: RNA-binding protein Hfq (102 aa).

Residues 9–68 (DPFLNALRRERVPVSIYLVNGIKLQGQIESFDQFVILLKNTVSQMVYKHAISTVVPSRPV) form the Sm domain. The disordered stretch occupies residues 64–102 (PSRPVSHHSNTPSGGTSNYHHGNNPSAPQQPQQESDDAE). The segment covering 70-96 (HHSNTPSGGTSNYHHGNNPSAPQQPQQ) has biased composition (polar residues).

This sequence belongs to the Hfq family. In terms of assembly, homohexamer.

Functionally, RNA chaperone that binds small regulatory RNA (sRNAs) and mRNAs to facilitate mRNA translational regulation in response to envelope stress, environmental stress and changes in metabolite concentrations. Also binds with high specificity to tRNAs. The chain is RNA-binding protein Hfq from Serratia proteamaculans (strain 568).